Reading from the N-terminus, the 174-residue chain is UPF0113 protein APE_0516.1 (174 aa).

The protein belongs to the UPF0113 family.

The protein is UPF0113 protein APE_0516.1 of Aeropyrum pernix (strain ATCC 700893 / DSM 11879 / JCM 9820 / NBRC 100138 / K1).